The sequence spans 320 residues: MDYRVLLYYKYVTIDDPETFAAEHLKFCKEHHLKGRILVSTEGINGTLSGTKEDTDKYIEHMHADNRFADLTFKIDEAESHAFKKMHVRPRREIVALDLEEDINPREITGKYYSPKEFKAALEDENTVILDARNDYEYDLGHFRGAIRPDITRFRDLPEWVRNNKEQLDGKNIVTYCTGGIRCEKFSGWLVKEGFENVGQLHGGIATYGKDPETKGQYWDGKMYVFDERISVDVNQIDKTVIGKEHFDGTPCERYINCANPECNKQILVSEENEEKYLGACSYDCAKHERNRYVARHHISNEEWQRRLNNFKDVPEHTHA.

The 95-residue stretch at 123-217 folds into the Rhodanese domain; sequence EDENTVILDA…YGKDPETKGQ (95 aa). C177 functions as the Cysteine persulfide intermediate in the catalytic mechanism.

The protein belongs to the TrhO family.

The enzyme catalyses uridine(34) in tRNA + AH2 + O2 = 5-hydroxyuridine(34) in tRNA + A + H2O. Functionally, catalyzes oxygen-dependent 5-hydroxyuridine (ho5U) modification at position 34 in tRNAs. This Staphylococcus epidermidis (strain ATCC 12228 / FDA PCI 1200) protein is tRNA uridine(34) hydroxylase.